Consider the following 150-residue polypeptide: Arginine repressor (150 aa).

This sequence belongs to the ArgR family.

The protein localises to the cytoplasm. The protein operates within amino-acid biosynthesis; L-arginine biosynthesis [regulation]. Its function is as follows. Regulates arginine biosynthesis genes. The polypeptide is Arginine repressor (Clostridium beijerinckii (strain ATCC 51743 / NCIMB 8052) (Clostridium acetobutylicum)).